The primary structure comprises 474 residues: mRNA cap guanine-N(7) methyltransferase (474 aa).

The span at Met-1–Pro-12 shows a compositional bias: polar residues. Positions Met-1 to Asp-106 are disordered. The span at Ser-56 to Gly-100 shows a compositional bias: basic and acidic residues. Residues Ser-170–Val-474 enclose the mRNA cap 0 methyltransferase domain. Residue Asn-179–Asn-180 participates in mRNA binding. The S-adenosyl-L-methionine site is built by Lys-183, Cys-207, Asp-229, Asp-269, Gln-299, and Tyr-304.

It belongs to the class I-like SAM-binding methyltransferase superfamily. mRNA cap 0 methyltransferase family.

It is found in the nucleus. It carries out the reaction a 5'-end (5'-triphosphoguanosine)-ribonucleoside in mRNA + S-adenosyl-L-methionine = a 5'-end (N(7)-methyl 5'-triphosphoguanosine)-ribonucleoside in mRNA + S-adenosyl-L-homocysteine. Functionally, responsible for methylating the 5'-cap structure of mRNAs. The polypeptide is mRNA cap guanine-N(7) methyltransferase (ABD1) (Candida albicans (strain SC5314 / ATCC MYA-2876) (Yeast)).